Here is a 333-residue protein sequence, read N- to C-terminus: UPF0285 protein MTH_1441 (333 aa).

It belongs to the UPF0285 family.

The sequence is that of UPF0285 protein MTH_1441 from Methanothermobacter thermautotrophicus (strain ATCC 29096 / DSM 1053 / JCM 10044 / NBRC 100330 / Delta H) (Methanobacterium thermoautotrophicum).